The chain runs to 479 residues: ATP synthase subunit beta (479 aa).

160–167 is a binding site for ATP; it reads GGAGVGKT.

Belongs to the ATPase alpha/beta chains family. F-type ATPases have 2 components, CF(1) - the catalytic core - and CF(0) - the membrane proton channel. CF(1) has five subunits: alpha(3), beta(3), gamma(1), delta(1), epsilon(1). CF(0) has three main subunits: a(1), b(2) and c(9-12). The alpha and beta chains form an alternating ring which encloses part of the gamma chain. CF(1) is attached to CF(0) by a central stalk formed by the gamma and epsilon chains, while a peripheral stalk is formed by the delta and b chains.

Its subcellular location is the cell inner membrane. The catalysed reaction is ATP + H2O + 4 H(+)(in) = ADP + phosphate + 5 H(+)(out). Functionally, produces ATP from ADP in the presence of a proton gradient across the membrane. The catalytic sites are hosted primarily by the beta subunits. This Anaplasma phagocytophilum (strain HZ) protein is ATP synthase subunit beta.